A 331-amino-acid polypeptide reads, in one-letter code: Ribosomal RNA small subunit methyltransferase H (331 aa).

S-adenosyl-L-methionine contacts are provided by residues 48 to 50, Asp67, Asp115, and Gln122; that span reads GGH. The interval 297–331 is disordered; sequence RGTEKPTEEEISENRRASSAKVRAVEKIRTSRTTA. A compositionally biased stretch (basic and acidic residues) spans 298–312; that stretch reads GTEKPTEEEISENRR.

It belongs to the methyltransferase superfamily. RsmH family.

It is found in the cytoplasm. The enzyme catalyses cytidine(1402) in 16S rRNA + S-adenosyl-L-methionine = N(4)-methylcytidine(1402) in 16S rRNA + S-adenosyl-L-homocysteine + H(+). Specifically methylates the N4 position of cytidine in position 1402 (C1402) of 16S rRNA. The chain is Ribosomal RNA small subunit methyltransferase H from Micrococcus luteus (strain ATCC 4698 / DSM 20030 / JCM 1464 / CCM 169 / CCUG 5858 / IAM 1056 / NBRC 3333 / NCIMB 9278 / NCTC 2665 / VKM Ac-2230) (Micrococcus lysodeikticus).